Reading from the N-terminus, the 246-residue chain is DNA polymerase sliding clamp (246 aa).

It belongs to the PCNA family. Homotrimer. The subunits circularize to form a toroid; DNA passes through its center. Replication factor C (RFC) is required to load the toroid on the DNA.

Functionally, sliding clamp subunit that acts as a moving platform for DNA processing. Responsible for tethering the catalytic subunit of DNA polymerase and other proteins to DNA during high-speed replication. In Thermoplasma volcanium (strain ATCC 51530 / DSM 4299 / JCM 9571 / NBRC 15438 / GSS1), this protein is DNA polymerase sliding clamp.